The chain runs to 246 residues: Complement C1q tumor necrosis factor-related protein 3 (246 aa).

The N-terminal stretch at 1–22 is a signal peptide; that stretch reads MLWRQLIYWQLLALFFLPFCLC. The Collagen-like domain maps to 51–113; the sequence is GYQGPPGPPG…KGEKGYPGIP (63 aa). Residues 53-110 form a disordered region; that stretch reads QGPPGPPGPPGIPGNHGNNGNNGATGHEGAKGEKGDKGDLGPRGERGQHGPKGEKGYP. Residues 55-64 show a composition bias toward pro residues; sequence PPGPPGPPGI. Residues 65-74 show a composition bias toward low complexity; sequence PGNHGNNGNN. Asparagine 70 carries an N-linked (GlcNAc...) asparagine glycan. The span at 80–107 shows a compositional bias: basic and acidic residues; that stretch reads EGAKGEKGDKGDLGPRGERGQHGPKGEK. A C1q domain is found at 113–246; sequence PPELQIAFMA…FAGFLLFETK (134 aa).

Post-translationally, glycosylated on Asn-70. As to expression, expressed in colon and small intestine.

It localises to the secreted. This is Complement C1q tumor necrosis factor-related protein 3 (C1QTNF3) from Homo sapiens (Human).